A 1411-amino-acid chain; its full sequence is Protein ECM5 (1411 aa).

Residues 118-159 (IPTFILAKKELPDPIKFYELVEDLGSVYGCVKLKIIPDADKF) form the JmjN domain. Positions 185–279 (RTKIVDFYAK…ILLDFDIYEE (95 aa)) constitute an ARID domain. The interval 285 to 312 (RNNEKNEDMVESEIFRHSNSRSRDEEEP) is disordered. Residues 476–695 (KNILDQWNLD…FSSEAAKWTS (220 aa)) form the JmjC domain. Residues 1238–1290 (TKYCFCRRVEEGTAMVECEICKEWYHVDCISNGELVPPDDPNVLFVCSICTPP) form a PHD-type zinc finger.

The protein localises to the nucleus. In terms of biological role, may be involved in cell wall organization and biogenesis. The chain is Protein ECM5 (ECM5) from Saccharomyces cerevisiae (strain ATCC 204508 / S288c) (Baker's yeast).